Consider the following 517-residue polypeptide: Serine hydroxymethyltransferase 1, mitochondrial (517 aa).

The transit peptide at 1–31 (MAMALALRRLSSSADKPLQRLFNGGHLYSMS) directs the protein to the mitochondrion. N6-(pyridoxal phosphate)lysine is present on Lys287.

Belongs to the SHMT family. As to quaternary structure, homotetramer. It depends on pyridoxal 5'-phosphate as a cofactor.

Its subcellular location is the mitochondrion. It carries out the reaction (6R)-5,10-methylene-5,6,7,8-tetrahydrofolate + glycine + H2O = (6S)-5,6,7,8-tetrahydrofolate + L-serine. Its pathway is one-carbon metabolism; tetrahydrofolate interconversion. Catalyzes the interconversion of serine and glycine. In Flaveria pringlei, this protein is Serine hydroxymethyltransferase 1, mitochondrial.